A 1559-amino-acid polypeptide reads, in one-letter code: Fatty acid synthase alpha subunit stcJ (1559 aa).

Residues 68–147 (DTPLTAIFII…AALGEVSLGP (80 aa)) enclose the Carrier domain. S106 carries the O-(pantetheine 4'-phosphoryl)serine modification. The segment at 457–693 (NHTYLITGAG…SLLLTPQLAT (237 aa)) is ketoreductase (KR) domain. A Ketosynthase family 3 (KS3) domain is found at 873-1327 (REVFQEIVLE…QKEAQLVGVH (455 aa)). C1058 (for beta-ketoacyl synthase activity) is an active-site residue. Residues 1105-1117 (VRDEQARGREPGE) are compositionally biased toward basic and acidic residues. Residues 1105 to 1125 (VRDEQARGREPGEMSRPTAAS) are disordered. Catalysis depends on for beta-ketoacyl synthase activity residues H1212 and H1253. D1432 contacts Mg(2+). Acetyl-CoA-binding positions include 1432–1434 (DTV), 1480–1490 (EAVFKCLQTVS), 1504–1506 (RVQ), and 1532–1534 (LSY). S1533 contacts Mg(2+).

The protein belongs to the thiolase-like superfamily. Fungal fatty acid synthetase subunit alpha family. [Alpha(6)beta(6)] hexamers of two multifunctional subunits (alpha and beta).

The enzyme catalyses acetyl-CoA + n malonyl-CoA + 2n NADPH + 4n H(+) = a long-chain-acyl-CoA + n CoA + n CO2 + 2n NADP(+).. It catalyses the reaction a fatty acyl-[ACP] + malonyl-[ACP] + H(+) = a 3-oxoacyl-[ACP] + holo-[ACP] + CO2. The catalysed reaction is a (3R)-hydroxyacyl-[ACP] + NADP(+) = a 3-oxoacyl-[ACP] + NADPH + H(+). It functions in the pathway mycotoxin biosynthesis; sterigmatocystin biosynthesis. Functionally, fatty acid synthase alpha subunit; part of the gene cluster that mediates the biosynthesis of sterigmatocystin (ST), a polyketide-derived furanocoumarin which is part of the most toxic and carcinogenic compounds among the known mycotoxins. The first step in the biosynthesis of sterigmatocystin is the production of hexanoate by the fatty acid synthase (FAS) units stcJ and stcK. The polyketide backbone is assembled by the non-reducing polyketide synthase stcA by condensation of the starter hexanoyl-CoA and 7 malonyl-CoA extender units followed by cyclization and release of norsolorinic acid. Norsolorinic acid is the first stable intermediate in the biosynthesis of sterigmatocystin and is converted into averantin (AVN) by the ketoreductase stcE which reduces the hexanoate ketone to an alcohol. Averantin is then oxidized into 5'-hydroxyaverantin (HAVN) by the cytochrome P450 monooxygenase stcF. 5'-hydroxyaverantin is further converted to 5'-oxyaverantin (OAVN) by the 5'-hydroxyaverantin dehydrogenase stcG. The next step is the conversion of OAVN into averufin (AVF) which is catalyzed by a yet to be identified enzyme. The cytochrome P450 monooxygenase stcB and the flavin-binding monooxygenase stcW are both required for the conversion of averufin to 1-hydroxyversicolorone. The esterase stcI probably catalyzes the formation of versiconal hemiacetal acetate from 1-hydroxyversicolorone. The oxydoreductase stcN then probably catalyzes the biosynthetic step from versiconal to versicolorin B (VERB). The next step is performed by the versicolorin B desaturase stcL to produce versicolorin A (VERA). The ketoreductase stcU and the cytochrome P450 monooxygenase stcS are involved in the conversion of versicolorin A to demethylsterigmatocystin. The Baeyer-Villiger oxidas stcQ and the reductase stcR might be involved in the biosynthetic step from versicolorin A to demethylsterigmatocystin. The final step in the biosynthesis of sterigmatocystin is the methylation of demethylsterigmatocystin catalyzed by the methyltransferase stcP. The chain is Fatty acid synthase alpha subunit stcJ from Emericella nidulans (strain FGSC A4 / ATCC 38163 / CBS 112.46 / NRRL 194 / M139) (Aspergillus nidulans).